The following is a 154-amino-acid chain: Protein X (154 aa).

A mitochondrial targeting sequence region spans residues 68-117; that stretch reads PCALRFTSARRMETTVNAHGNLPKVLHKRTLGLSAMSTTDLEAYFKDCVF.

This sequence belongs to the orthohepadnavirus protein X family. May form homodimer. May interact with host CEBPA, CFLAR, CREB1, DDB1, E4F1, HBXIP, HSPD1/HSP60, NFKBIA, POLR2E and SMAD4. Interacts with host SMC5-SMC6 complex and induces its degradation. Interacts with host TRPC4AP; leading to prevent ubiquitination of TRPC4AP. Interacts with host PLSCR1; this interaction promotes ubiquitination and degradation of HBx and impairs HBx-mediated cell proliferation. Post-translationally, a fraction may be phosphorylated in insect cells and HepG2 cells, a human hepatoblastoma cell line. Phosphorylated in vitro by host protein kinase C or mitogen-activated protein kinase. N-acetylated in insect cells.

It is found in the host cytoplasm. It localises to the host nucleus. Its subcellular location is the host mitochondrion. Functionally, multifunctional protein that plays a role in silencing host antiviral defenses and promoting viral transcription. Does not seem to be essential for HBV infection. May be directly involved in development of cirrhosis and liver cancer (hepatocellular carcinoma). Most of cytosolic activities involve modulation of cytosolic calcium. The effect on apoptosis is controversial depending on the cell types in which the studies have been conducted. May induce apoptosis by localizing in mitochondria and causing loss of mitochondrial membrane potential. May also modulate apoptosis by binding host CFLAR, a key regulator of the death-inducing signaling complex (DISC). Promotes viral transcription by using the host E3 ubiquitin ligase DDB1 to target the SMC5-SMC6 complex to proteasomal degradation. This host complex would otherwise bind to viral episomal DNA, and prevents its transcription. Moderately stimulates transcription of many different viral and cellular transcription elements. Promoters and enhancers stimulated by HBx contain DNA binding sites for NF-kappa-B, AP-1, AP-2, c-EBP, ATF/CREB, or the calcium-activated factor NF-AT. In Hepatitis B virus genotype B/C subtype adw (isolate Okinawa/pODW282/1998) (HBV-B), this protein is Protein X.